Reading from the N-terminus, the 193-residue chain is Adenine phosphoribosyltransferase (193 aa).

Belongs to the purine/pyrimidine phosphoribosyltransferase family. As to quaternary structure, homodimer.

It localises to the cytoplasm. It carries out the reaction AMP + diphosphate = 5-phospho-alpha-D-ribose 1-diphosphate + adenine. It functions in the pathway purine metabolism; AMP biosynthesis via salvage pathway; AMP from adenine: step 1/1. Functionally, catalyzes a salvage reaction resulting in the formation of AMP, that is energically less costly than de novo synthesis. The polypeptide is Adenine phosphoribosyltransferase (Bifidobacterium longum subsp. infantis (strain ATCC 15697 / DSM 20088 / JCM 1222 / NCTC 11817 / S12)).